Here is a 612-residue protein sequence, read N- to C-terminus: Anaerobic magnesium-protoporphyrin IX monomethyl ester cyclase (612 aa).

The B12-binding domain occupies 9–143 (NYHSGGAEIA…KAYEADNFAE (135 aa)). A Radical SAM core domain is found at 190–417 (PLGVRVAIPN…MKPKALTRGE (228 aa)). 3 residues coordinate [4Fe-4S] cluster: Cys-204, Cys-208, and Cys-211.

It belongs to the BchE family. The cofactor is [4Fe-4S] cluster. Adenosylcob(III)alamin is required as a cofactor.

It carries out the reaction Mg-protoporphyrin IX 13-monomethyl ester + 3 S-adenosyl-L-methionine + H2O = 3,8-divinyl protochlorophyllide a + 3 5'-deoxyadenosine + 3 L-methionine + 4 H(+). The protein operates within porphyrin-containing compound metabolism; bacteriochlorophyll biosynthesis (light-independent). Involved in the tetrapyrrole biosynthetic pathways leading to chlorophyll and bacteriochlorophyll (BChl). Catalyzes the anaerobic formation of the isocyclic ring (E-ring) in Mg-protoporphyrin monomethyl ester (MPE) to yield protochlorophyllide a (PChlide a) via a six-electron oxidation and the formation of an oxo group at position C13 using oxygen from a water molecule. The sequence is that of Anaerobic magnesium-protoporphyrin IX monomethyl ester cyclase from Cereibacter sphaeroides (strain ATCC 17023 / DSM 158 / JCM 6121 / CCUG 31486 / LMG 2827 / NBRC 12203 / NCIMB 8253 / ATH 2.4.1.) (Rhodobacter sphaeroides).